Consider the following 186-residue polypeptide: Ran guanine nucleotide release factor (186 aa).

The tract at residues 27 to 70 (DLRPVPDHQEVFCHRVTDQSLIVELLELQAHVQGEEAARYHFED) is interaction with RAN.

It belongs to the MOG1 family. Monomer. Interacts with RAN, both RAN-GTP and RAN-GDP. Competes with RCC1 for a common binding site on RAN and thereby inhibits RCC1-mediated nucleotide exchange. Forms a complex with RAN-GTP and RANBP1. Interacts with the cytoplasmic loop 2 of SCN5A.

It localises to the nucleus. Its subcellular location is the cytoplasm. It is found in the perinuclear region. The protein resides in the cell membrane. Its function is as follows. May regulate the intracellular trafficking of RAN. Promotes guanine nucleotide release from RAN and inhibits binding of new GTP by preventing the binding of the RAN guanine nucleotide exchange factor RCC1. Regulates the levels of GTP-bound RAN in the nucleus, and thereby plays a role in the regulation of RAN-dependent mitotic spindle dynamics. Enhances the expression of SCN5A at the cell membrane in cardiomyocytes. In Bos taurus (Bovine), this protein is Ran guanine nucleotide release factor (RANGRF).